A 602-amino-acid polypeptide reads, in one-letter code: Chaperone protein dnaK (602 aa).

The protein belongs to the heat shock protein 70 family.

Its subcellular location is the plastid. It is found in the chloroplast. Its function is as follows. Acts as a chaperone. This Thalassiosira pseudonana (Marine diatom) protein is Chaperone protein dnaK.